A 160-amino-acid chain; its full sequence is Cytochrome b6-f complex subunit 4 (160 aa).

Transmembrane regions (helical) follow at residues 36-56, 95-115, and 131-151; these read LLYV…GLAI, LLGV…PFIE, and TIFL…TMPI.

This sequence belongs to the cytochrome b family. PetD subfamily. In terms of assembly, the 4 large subunits of the cytochrome b6-f complex are cytochrome b6, subunit IV (17 kDa polypeptide, petD), cytochrome f and the Rieske protein, while the 4 small subunits are petG, petL, petM and petN. The complex functions as a dimer.

Its subcellular location is the plastid. The protein resides in the chloroplast thylakoid membrane. In terms of biological role, component of the cytochrome b6-f complex, which mediates electron transfer between photosystem II (PSII) and photosystem I (PSI), cyclic electron flow around PSI, and state transitions. The protein is Cytochrome b6-f complex subunit 4 of Porphyra purpurea (Red seaweed).